A 67-amino-acid polypeptide reads, in one-letter code: DNA gyrase inhibitor YacG (67 aa).

Zn(2+) contacts are provided by C9, C12, C28, and C32. The disordered stretch occupies residues 48–67 (PVSPDAEDELFSEELPPRAH).

This sequence belongs to the DNA gyrase inhibitor YacG family. As to quaternary structure, interacts with GyrB. It depends on Zn(2+) as a cofactor.

Its function is as follows. Inhibits all the catalytic activities of DNA gyrase by preventing its interaction with DNA. Acts by binding directly to the C-terminal domain of GyrB, which probably disrupts DNA binding by the gyrase. The sequence is that of DNA gyrase inhibitor YacG from Pseudomonas fluorescens (strain ATCC BAA-477 / NRRL B-23932 / Pf-5).